The chain runs to 423 residues: Type II methyltransferase M.NlaIV (423 aa).

The SAM-dependent MTase C5-type domain maps to 4 to 423; it reads IKFIDLFSGM…AVSERLLHTL (420 aa). Cys-80 is a catalytic residue.

Belongs to the class I-like SAM-binding methyltransferase superfamily. C5-methyltransferase family.

It carries out the reaction a 2'-deoxycytidine in DNA + S-adenosyl-L-methionine = a 5-methyl-2'-deoxycytidine in DNA + S-adenosyl-L-homocysteine + H(+). Its function is as follows. A methylase that recognizes the double-stranded sequence 5'-GGNNCC-3', methylates C-? on both strands, and protects the DNA from cleavage by the NlaIV endonuclease. The chain is Type II methyltransferase M.NlaIV (nlaIVM) from Neisseria lactamica.